The chain runs to 158 residues: Large ribosomal subunit protein bL21 (158 aa).

The interval 127-158 (TQETKSAASVKKAAKKSAPQKQAAVASNSKED) is disordered. A compositionally biased stretch (low complexity) spans 131-158 (KSAASVKKAAKKSAPQKQAAVASNSKED).

The protein belongs to the bacterial ribosomal protein bL21 family. Part of the 50S ribosomal subunit. Contacts protein L20.

This protein binds to 23S rRNA in the presence of protein L20. The chain is Large ribosomal subunit protein bL21 from Bartonella henselae (strain ATCC 49882 / DSM 28221 / CCUG 30454 / Houston 1) (Rochalimaea henselae).